The chain runs to 442 residues: Sexual development regulator VELC (442 aa).

Disordered stretches follow at residues 1-192 (MPVH…ASLA) and 396-442 (KKGN…IRRS). Pro residues predominate over residues 45 to 54 (IAPPPPPTPP). Positions 79–97 (PGPRRPSNPSSPQHPQQPG) are enriched in low complexity. One can recognise a Velvet domain in the interval 213-396 (FSTSEYHLHV…KEQGCLISIK (184 aa)). Over residues 401–411 (KGGGGGGGGPS) the composition is skewed to gly residues. Over residues 433-442 (AGKRKRIRRS) the composition is skewed to basic residues.

This sequence belongs to the velvet family. VelC subfamily.

It is found in the nucleus. In terms of biological role, velvet-domain-containing protein that acts as a positive regulator of sexual development. Plays an important role in pathogenicity through regulating positively appressorium-mediated penetration and invasive growth. This Pyricularia oryzae (strain 70-15 / ATCC MYA-4617 / FGSC 8958) (Rice blast fungus) protein is Sexual development regulator VELC.